A 230-amino-acid chain; its full sequence is Ephrin-A3 (230 aa).

The signal sequence occupies residues 1–22; sequence MAAAPLLLLLLLVPVPLLPLLA. Residues 30 to 161 enclose the Ephrin RBD domain; the sequence is GNRHAVYWNS…RMKVFVCCAS (132 aa). 4 N-linked (GlcNAc...) asparagine glycosylation sites follow: Asn38, Asn67, Asn84, and Asn92. 2 disulfides stabilise this stretch: Cys63–Cys102 and Cys91–Cys150. Gly206 carries GPI-anchor amidated glycine lipidation. A propeptide spans 207 to 230 (removed in mature form); sequence TSPKREHLPLAVGIAFFLMTLLAS.

It belongs to the ephrin family. Interacts with EPHA8; activates EPHA8. As to expression, expressed in myogenic progenitor cells.

The protein resides in the cell membrane. Functionally, cell surface GPI-bound ligand for Eph receptors, a family of receptor tyrosine kinases which are crucial for migration, repulsion and adhesion during neuronal, vascular and epithelial development. Binds promiscuously Eph receptors residing on adjacent cells, leading to contact-dependent bidirectional signaling into neighboring cells. The signaling pathway downstream of the receptor is referred to as forward signaling while the signaling pathway downstream of the ephrin ligand is referred to as reverse signaling. This is Ephrin-A3 (Efna3) from Mus musculus (Mouse).